The chain runs to 256 residues: uncharacterized protein (256 aa).

Helical transmembrane passes span 32-52, 59-79, 112-132, 156-176, 184-204, 207-227, and 230-250; these read ILAS…GSYF, FAFP…AYGG, YAGN…TGLF, LFFR…IPMS, LFTM…HSIA, CTFA…MGAV, and LIPV…WMYY.

It belongs to the FNT transporter (TC 1.A.16) family.

Its subcellular location is the cell membrane. This is an uncharacterized protein from Bacillus subtilis (strain 168).